Here is a 281-residue protein sequence, read N- to C-terminus: Diaminopimelate epimerase (281 aa).

The substrate site is built by Asn13, Gln51, and Asn70. Cys79 serves as the catalytic Proton donor. Residues Gly80–Asn81, Asn163, Asn196, and Glu214–Arg215 contribute to the substrate site. Cys223 serves as the catalytic Proton acceptor. A substrate-binding site is contributed by Gly224–Ser225.

Belongs to the diaminopimelate epimerase family. Homodimer.

Its subcellular location is the cytoplasm. The enzyme catalyses (2S,6S)-2,6-diaminopimelate = meso-2,6-diaminopimelate. It functions in the pathway amino-acid biosynthesis; L-lysine biosynthesis via DAP pathway; DL-2,6-diaminopimelate from LL-2,6-diaminopimelate: step 1/1. Its function is as follows. Catalyzes the stereoinversion of LL-2,6-diaminopimelate (L,L-DAP) to meso-diaminopimelate (meso-DAP), a precursor of L-lysine and an essential component of the bacterial peptidoglycan. The protein is Diaminopimelate epimerase of Alcanivorax borkumensis (strain ATCC 700651 / DSM 11573 / NCIMB 13689 / SK2).